A 377-amino-acid chain; its full sequence is Lactosylceramide 1,3-N-acetyl-beta-D-glucosaminyltransferase B (377 aa).

Over Met1 to Ser13 the chain is Cytoplasmic. The chain crosses the membrane as a helical; Signal-anchor for type II membrane protein span at residues Leu14–Val30. The Lumenal segment spans residues Gln31–Ser377. 3 N-linked (GlcNAc...) asparagine glycosylation sites follow: Asn56, Asn167, and Asn275.

It belongs to the glycosyltransferase 31 family.

Its subcellular location is the golgi apparatus membrane. The enzyme catalyses a beta-D-Gal-(1-&gt;4)-beta-D-Glc-(1&lt;-&gt;1)-Cer(d18:1(4E)) + UDP-N-acetyl-alpha-D-glucosamine = a beta-D-GlcNAc-(1-&gt;3)-beta-D-Gal-(1-&gt;4)-beta-D-Glc-(1&lt;-&gt;1)-Cer(d18:1(4E)) + UDP + H(+). The catalysed reaction is a neolactoside nLc4Cer(d18:1(4E)) + UDP-N-acetyl-alpha-D-glucosamine = a neolactoside IV(3)-beta-GlcNAc-nLc4Cer(d18:1(4E)) + UDP + H(+). Its pathway is protein modification; protein glycosylation. Its function is as follows. Beta-1,3-N-acetylglucosaminyltransferase that plays a key role in the synthesis of lacto- or neolacto-series carbohydrate chains on glycolipids. The chain is Lactosylceramide 1,3-N-acetyl-beta-D-glucosaminyltransferase B (b3gnt5-b) from Xenopus laevis (African clawed frog).